A 179-amino-acid polypeptide reads, in one-letter code: Cytochrome b6-f complex iron-sulfur subunit (179 aa).

Residues 21–43 (LLTFGTVTGVALGALYPVVKYFI) traverse the membrane as a helical segment. Residues 61–162 (GNDVSLSKFL…ANTVDDKIIL (102 aa)) form the Rieske domain. [2Fe-2S] cluster-binding residues include Cys108, His110, Cys126, and His129. A disulfide bond links Cys113 and Cys128.

Belongs to the Rieske iron-sulfur protein family. As to quaternary structure, the 4 large subunits of the cytochrome b6-f complex are cytochrome b6, subunit IV (17 kDa polypeptide, PetD), cytochrome f and the Rieske protein, while the 4 small subunits are PetG, PetL, PetM and PetN. The complex functions as a dimer. The cofactor is [2Fe-2S] cluster.

The protein localises to the cellular thylakoid membrane. The enzyme catalyses 2 oxidized [plastocyanin] + a plastoquinol + 2 H(+)(in) = 2 reduced [plastocyanin] + a plastoquinone + 4 H(+)(out). Its function is as follows. Component of the cytochrome b6-f complex, which mediates electron transfer between photosystem II (PSII) and photosystem I (PSI), cyclic electron flow around PSI, and state transitions. In Desmonostoc sp. (strain PCC 7906) (Nostoc sp. (strain PCC 7906)), this protein is Cytochrome b6-f complex iron-sulfur subunit.